Here is a 332-residue protein sequence, read N- to C-terminus: Protein pelota homolog (332 aa).

It belongs to the eukaryotic release factor 1 family. Pelota subfamily. As to quaternary structure, monomer. Requires a divalent metal cation as cofactor.

The protein resides in the cytoplasm. Its function is as follows. May function in recognizing stalled ribosomes, interact with stem-loop structures in stalled mRNA molecules, and effect endonucleolytic cleavage of the mRNA. May play a role in the release non-functional ribosomes and degradation of damaged mRNAs. Has endoribonuclease activity. The sequence is that of Protein pelota homolog from Pyrobaculum aerophilum (strain ATCC 51768 / DSM 7523 / JCM 9630 / CIP 104966 / NBRC 100827 / IM2).